Reading from the N-terminus, the 287-residue chain is Nucleotide-binding protein VP2673 (287 aa).

8–15 is a binding site for ATP; it reads GHSGAGKS. 56–59 contributes to the GTP binding site; the sequence is DIRN.

The protein belongs to the RapZ-like family.

Functionally, displays ATPase and GTPase activities. This Vibrio parahaemolyticus serotype O3:K6 (strain RIMD 2210633) protein is Nucleotide-binding protein VP2673.